The sequence spans 297 residues: Glycine--tRNA ligase alpha subunit (297 aa).

Belongs to the class-II aminoacyl-tRNA synthetase family. Tetramer of two alpha and two beta subunits.

It is found in the cytoplasm. It catalyses the reaction tRNA(Gly) + glycine + ATP = glycyl-tRNA(Gly) + AMP + diphosphate. This Sulfurihydrogenibium sp. (strain YO3AOP1) protein is Glycine--tRNA ligase alpha subunit.